Consider the following 360-residue polypeptide: Ferrochelatase (360 aa).

Residues H210 and E291 each coordinate Fe cation.

The protein belongs to the ferrochelatase family.

Its subcellular location is the cytoplasm. It carries out the reaction heme b + 2 H(+) = protoporphyrin IX + Fe(2+). Its pathway is porphyrin-containing compound metabolism; protoheme biosynthesis; protoheme from protoporphyrin-IX: step 1/1. Catalyzes the ferrous insertion into protoporphyrin IX. The chain is Ferrochelatase from Pseudoalteromonas atlantica (strain T6c / ATCC BAA-1087).